Reading from the N-terminus, the 101-residue chain is Small ribosomal subunit protein uS14 (101 aa).

Belongs to the universal ribosomal protein uS14 family. As to quaternary structure, part of the 30S ribosomal subunit. Contacts proteins S3 and S10.

Functionally, binds 16S rRNA, required for the assembly of 30S particles and may also be responsible for determining the conformation of the 16S rRNA at the A site. The protein is Small ribosomal subunit protein uS14 of Xylella fastidiosa (strain M23).